Here is a 281-residue protein sequence, read N- to C-terminus: CCAAT/enhancer-binding protein epsilon (281 aa).

The interval 1-30 (MSHGTYYECEPRGGQQPLEFSGGRAGPGEL) is disordered. Lysine 121 participates in a covalent cross-link: Glycyl lysine isopeptide (Lys-Gly) (interchain with G-Cter in SUMO2). Serine 181 carries the post-translational modification Phosphoserine. Residues 204 to 267 (SLEYRLRRER…DTLRNLFRQI (64 aa)) form the bZIP domain. The interval 208–245 (RLRRERNNIAVRKSRDKAKRRIMETQQKVLEYMAENER) is basic motif. A leucine-zipper region spans residues 246 to 267 (LRSRVDQLTQELDTLRNLFRQI).

It belongs to the bZIP family. C/EBP subfamily. Binds DNA as a homodimer and as a heterodimer. Can form stable heterodimers with CEBPA, CEBPB and CEBPD. Interacts with GATA1 and SPI1. Interacts with SMARCD2.

The protein localises to the nucleus. Transcriptional activator. C/EBP are DNA-binding proteins that recognize two different motifs: the CCAAT homology common to many promoters and the enhanced core homology common to many enhancers. Required for the promyelocyte-myelocyte transition in myeloid differentiation. This is CCAAT/enhancer-binding protein epsilon (Cebpe) from Rattus norvegicus (Rat).